A 364-amino-acid chain; its full sequence is Phosphoserine aminotransferase (364 aa).

R46 contributes to the L-glutamate binding site. Pyridoxal 5'-phosphate contacts are provided by residues 80 to 81 (AR), W106, T157, D176, and Q199. K200 carries the post-translational modification N6-(pyridoxal phosphate)lysine. Pyridoxal 5'-phosphate is bound at residue 241 to 242 (NT).

The protein belongs to the class-V pyridoxal-phosphate-dependent aminotransferase family. SerC subfamily. Homodimer. Pyridoxal 5'-phosphate is required as a cofactor.

Its subcellular location is the cytoplasm. The enzyme catalyses O-phospho-L-serine + 2-oxoglutarate = 3-phosphooxypyruvate + L-glutamate. It catalyses the reaction 4-(phosphooxy)-L-threonine + 2-oxoglutarate = (R)-3-hydroxy-2-oxo-4-phosphooxybutanoate + L-glutamate. It participates in amino-acid biosynthesis; L-serine biosynthesis; L-serine from 3-phospho-D-glycerate: step 2/3. It functions in the pathway cofactor biosynthesis; pyridoxine 5'-phosphate biosynthesis; pyridoxine 5'-phosphate from D-erythrose 4-phosphate: step 3/5. In terms of biological role, catalyzes the reversible conversion of 3-phosphohydroxypyruvate to phosphoserine and of 3-hydroxy-2-oxo-4-phosphonooxybutanoate to phosphohydroxythreonine. This is Phosphoserine aminotransferase from Vibrio vulnificus (strain CMCP6).